We begin with the raw amino-acid sequence, 252 residues long: 2-succinyl-6-hydroxy-2,4-cyclohexadiene-1-carboxylate synthase (252 aa).

It belongs to the AB hydrolase superfamily. MenH family. As to quaternary structure, monomer.

It carries out the reaction 5-enolpyruvoyl-6-hydroxy-2-succinyl-cyclohex-3-ene-1-carboxylate = (1R,6R)-6-hydroxy-2-succinyl-cyclohexa-2,4-diene-1-carboxylate + pyruvate. The protein operates within quinol/quinone metabolism; 1,4-dihydroxy-2-naphthoate biosynthesis; 1,4-dihydroxy-2-naphthoate from chorismate: step 3/7. Its pathway is quinol/quinone metabolism; menaquinone biosynthesis. Functionally, catalyzes a proton abstraction reaction that results in 2,5-elimination of pyruvate from 2-succinyl-5-enolpyruvyl-6-hydroxy-3-cyclohexene-1-carboxylate (SEPHCHC) and the formation of 2-succinyl-6-hydroxy-2,4-cyclohexadiene-1-carboxylate (SHCHC). This is 2-succinyl-6-hydroxy-2,4-cyclohexadiene-1-carboxylate synthase from Salmonella paratyphi B (strain ATCC BAA-1250 / SPB7).